We begin with the raw amino-acid sequence, 535 residues long: Doublesex- and mab-3-related transcription factor A2 (535 aa).

Positions 69–116 (CARCRNHGVVSALKGHKRYCRWKDCLCAKCTLIAERQRVMAAQVALRR) form a DNA-binding region, DM. The tract at residues 200 to 315 (LQAGRPGSPQ…GGPGPRQRTP (116 aa)) is disordered. The region spanning 313–348 (RTPLDILTRVFPGHRRGVLELVLQGCGGDVVQAIEQ) is the DMA domain.

This sequence belongs to the DMRT family.

Its subcellular location is the nucleus. May be involved in sexual development. The chain is Doublesex- and mab-3-related transcription factor A2 (DMRTA2) from Bos taurus (Bovine).